A 269-amino-acid polypeptide reads, in one-letter code: Formamidopyrimidine-DNA glycosylase (269 aa).

Catalysis depends on P2, which acts as the Schiff-base intermediate with DNA. The Proton donor role is filled by E3. The Proton donor; for beta-elimination activity role is filled by K57. H90, R109, and R150 together coordinate DNA. Residues 235-269 (QVYGKAGEQCPNCAELIQELKIGQRNTFYCSSCQV) form an FPG-type zinc finger. The Proton donor; for delta-elimination activity role is filled by R259.

This sequence belongs to the FPG family. In terms of assembly, monomer. The cofactor is Zn(2+).

It catalyses the reaction Hydrolysis of DNA containing ring-opened 7-methylguanine residues, releasing 2,6-diamino-4-hydroxy-5-(N-methyl)formamidopyrimidine.. The catalysed reaction is 2'-deoxyribonucleotide-(2'-deoxyribose 5'-phosphate)-2'-deoxyribonucleotide-DNA = a 3'-end 2'-deoxyribonucleotide-(2,3-dehydro-2,3-deoxyribose 5'-phosphate)-DNA + a 5'-end 5'-phospho-2'-deoxyribonucleoside-DNA + H(+). Its function is as follows. Involved in base excision repair of DNA damaged by oxidation or by mutagenic agents. Acts as a DNA glycosylase that recognizes and removes damaged bases. Has a preference for oxidized purines, such as 7,8-dihydro-8-oxoguanine (8-oxoG). Has AP (apurinic/apyrimidinic) lyase activity and introduces nicks in the DNA strand. Cleaves the DNA backbone by beta-delta elimination to generate a single-strand break at the site of the removed base with both 3'- and 5'-phosphates. This chain is Formamidopyrimidine-DNA glycosylase, found in Vibrio atlanticus (strain LGP32) (Vibrio splendidus (strain Mel32)).